The following is a 515-amino-acid chain: ATP synthase subunit alpha (515 aa).

171-178 contacts ATP; sequence GDRQTGKT.

This sequence belongs to the ATPase alpha/beta chains family. In terms of assembly, F-type ATPases have 2 components, CF(1) - the catalytic core - and CF(0) - the membrane proton channel. CF(1) has five subunits: alpha(3), beta(3), gamma(1), delta(1), epsilon(1). CF(0) has three main subunits: a(1), b(2) and c(9-12). The alpha and beta chains form an alternating ring which encloses part of the gamma chain. CF(1) is attached to CF(0) by a central stalk formed by the gamma and epsilon chains, while a peripheral stalk is formed by the delta and b chains.

The protein localises to the cell inner membrane. It carries out the reaction ATP + H2O + 4 H(+)(in) = ADP + phosphate + 5 H(+)(out). Functionally, produces ATP from ADP in the presence of a proton gradient across the membrane. The alpha chain is a regulatory subunit. This is ATP synthase subunit alpha from Xanthomonas oryzae pv. oryzae (strain MAFF 311018).